We begin with the raw amino-acid sequence, 326 residues long: Probable UDP-3-O-acyl-N-acetylglucosamine deacetylase 2, mitochondrial (326 aa).

The transit peptide at 1–21 (MRLPVTVKATKPSFLVIWIRY) directs the protein to the mitochondrion. Residues His109, His281, and Asp285 each contribute to the Zn(2+) site.

The protein belongs to the LpxC family. Requires Zn(2+) as cofactor.

It is found in the mitochondrion. It carries out the reaction a UDP-3-O-[(3R)-3-hydroxyacyl]-N-acetyl-alpha-D-glucosamine + H2O = a UDP-3-O-[(3R)-3-hydroxyacyl]-alpha-D-glucosamine + acetate. The protein operates within glycolipid biosynthesis; lipid IV(A) biosynthesis; lipid IV(A) from (3R)-3-hydroxytetradecanoyl-[acyl-carrier-protein] and UDP-N-acetyl-alpha-D-glucosamine: step 2/6. Involved in the biosynthesis of lipid A, a phosphorylated glycolipid that in bacteria anchors the lipopolysaccharide to the outer membrane of the cell. Lipid A-like molecules in plants may serve as structural components of the outer membranes of mitochondria and/or chloroplasts, or may be involved in signal transduction or plant defense responses (Potential). The sequence is that of Probable UDP-3-O-acyl-N-acetylglucosamine deacetylase 2, mitochondrial (LPXC2) from Arabidopsis thaliana (Mouse-ear cress).